The chain runs to 180 residues: Nucleoside triphosphate/diphosphate phosphatase (180 aa).

The active-site Proton donor is the R26. 6 residues coordinate Mg(2+): N90, D106, D108, D110, D123, and E126.

It belongs to the Ntdp family. Mg(2+) serves as cofactor.

The enzyme catalyses a ribonucleoside 5'-triphosphate + H2O = a ribonucleoside 5'-diphosphate + phosphate + H(+). It carries out the reaction a ribonucleoside 5'-diphosphate + H2O = a ribonucleoside 5'-phosphate + phosphate + H(+). Has nucleoside phosphatase activity towards nucleoside triphosphates and nucleoside diphosphates. The polypeptide is Nucleoside triphosphate/diphosphate phosphatase (Staphylococcus epidermidis (strain ATCC 35984 / DSM 28319 / BCRC 17069 / CCUG 31568 / BM 3577 / RP62A)).